The primary structure comprises 240 residues: Tetrahydromethanopterin S-methyltransferase subunit A (240 aa).

The Cytoplasmic portion of the chain corresponds to 1–218; sequence MAEKREPAAG…KFHAGVHAGK (218 aa). Histidine 85 contacts 5-hydroxybenzimidazolylcob(I)amide. The helical transmembrane segment at 219-239 threads the bilayer; that stretch reads FEGIMIGLAITLSLLGLILFG. Position 240 (arginine 240) is a topological domain, extracellular.

The protein belongs to the MtrA family. As to quaternary structure, the complex is composed of 8 subunits; MtrA, MtrB, MtrC, MtrD, MtrE, MtrF, MtrG and MtrH. The cofactor is 5-hydroxybenzimidazolylcob(I)amide.

The protein resides in the cell membrane. The enzyme catalyses 5-methyl-5,6,7,8-tetrahydromethanopterin + coenzyme M + 2 Na(+)(in) = 5,6,7,8-tetrahydromethanopterin + methyl-coenzyme M + 2 Na(+)(out). It functions in the pathway one-carbon metabolism; methanogenesis from CO(2); methyl-coenzyme M from 5,10-methylene-5,6,7,8-tetrahydromethanopterin: step 2/2. Its function is as follows. Part of a complex that catalyzes the formation of methyl-coenzyme M and tetrahydromethanopterin from coenzyme M and methyl-tetrahydromethanopterin. This is an energy-conserving, sodium-ion translocating step. In Methanohalophilus mahii (strain ATCC 35705 / DSM 5219 / SLP), this protein is Tetrahydromethanopterin S-methyltransferase subunit A.